The chain runs to 201 residues: Peptide deformylase (201 aa).

Residues Cys-121 and His-163 each coordinate Fe cation. The active site involves Glu-164. Residue His-167 participates in Fe cation binding.

This sequence belongs to the polypeptide deformylase family. The cofactor is Fe(2+).

It catalyses the reaction N-terminal N-formyl-L-methionyl-[peptide] + H2O = N-terminal L-methionyl-[peptide] + formate. Functionally, removes the formyl group from the N-terminal Met of newly synthesized proteins. Requires at least a dipeptide for an efficient rate of reaction. N-terminal L-methionine is a prerequisite for activity but the enzyme has broad specificity at other positions. In Synechococcus sp. (strain CC9902), this protein is Peptide deformylase.